A 65-amino-acid polypeptide reads, in one-letter code: Ferredoxin-like protein in vnf region (65 aa).

2 4Fe-4S ferredoxin-type domains span residues 2-29 (AMAIDGYECTVCGDCKPVCPTGSIVLQG) and 30-65 (GIYVIDADSCNECADLGEPRCLGVCPVDFCIQPLDD). Residues cysteine 10, cysteine 13, cysteine 16, cysteine 20, cysteine 39, cysteine 42, cysteine 50, and cysteine 54 each contribute to the [4Fe-4S] cluster site.

[4Fe-4S] cluster serves as cofactor.

This chain is Ferredoxin-like protein in vnf region, found in Azotobacter chroococcum mcd 1.